We begin with the raw amino-acid sequence, 167 residues long: Ubiquitin-fold modifier-conjugating enzyme 1 (167 aa).

The active-site Glycyl thioester intermediate is the cysteine 116. A Glycyl lysine isopeptide (Lys-Gly) (interchain with G-Cter in UFM1) cross-link involves residue lysine 122.

It belongs to the ubiquitin-conjugating enzyme family. UFC1 subfamily. As to quaternary structure, interacts with UBA5 (via C-terminus). Interacts with UFL1. Interacts with UFM1. Interacts with KIRREL3. Ufmylated at Lys-122. Deufmylated by UFSP1.

In terms of biological role, E2-like enzyme which specifically catalyzes the second step in ufmylation. Accepts the ubiquitin-like modifier UFM1 from the E1 enzyme UBA5 and forms an intermediate with UFM1 via a thioester linkage. Ufmylation is involved in various processes, such as ribosome recycling, response to DNA damage, interferon response or reticulophagy (also called ER-phagy). This Homo sapiens (Human) protein is Ubiquitin-fold modifier-conjugating enzyme 1.